The following is a 387-amino-acid chain: Patatin-02 (387 aa).

An N-terminal signal peptide occupies residues 1–23; that stretch reads MATTKSFLILIVMILATTSSTFA. The PNPLA domain occupies 32–230; sequence LSIDGGGIKG…TVADPALLSV (199 aa). The GXGXXG motif lies at 36-41; that stretch reads GGGIKG. Residues 75–79 carry the GXSXG motif; the sequence is GTSTG. The Nucleophile role is filled by S77. N-linked (GlcNAc...) asparagine glycosylation is present at N115. D216 serves as the catalytic Proton acceptor. A DGA/G motif is present at residues 216 to 218; sequence DGA. A coiled-coil region spans residues 361-385; that stretch reads ETYEEALKRFAKLLSDRKKLRANKA.

Belongs to the patatin family. As to expression, tuber and stolon.

It is found in the vacuole. Its function is as follows. Probable lipolytic acyl hydrolase (LAH), an activity which is thought to be involved in the response of tubers to pathogens. This Solanum tuberosum (Potato) protein is Patatin-02.